A 176-amino-acid polypeptide reads, in one-letter code: Nucleoside triphosphate/diphosphate phosphatase (176 aa).

The active-site Proton donor is R23. Positions 87, 103, 105, 107, 120, and 123 each coordinate Mg(2+).

Belongs to the Ntdp family. Requires Mg(2+) as cofactor.

It carries out the reaction a ribonucleoside 5'-triphosphate + H2O = a ribonucleoside 5'-diphosphate + phosphate + H(+). The enzyme catalyses a ribonucleoside 5'-diphosphate + H2O = a ribonucleoside 5'-phosphate + phosphate + H(+). Has nucleoside phosphatase activity towards nucleoside triphosphates and nucleoside diphosphates. This is Nucleoside triphosphate/diphosphate phosphatase from Bacillus velezensis (strain DSM 23117 / BGSC 10A6 / LMG 26770 / FZB42) (Bacillus amyloliquefaciens subsp. plantarum).